A 371-amino-acid chain; its full sequence is Cytochrome b (371 aa).

The next 4 helical transmembrane spans lie at 25-45 (FGSM…FLAV), 69-90 (WMMQ…YIHI), 105-125 (WMSG…GYVL), and 170-190 (FFAL…LHVI). Heme b contacts are provided by histidine 75 and histidine 89. Positions 174 and 188 each coordinate heme b. An a ubiquinone-binding site is contributed by histidine 193. The next 4 helical transmembrane spans lie at 218–238 (YKDL…VSFF), 280–300 (LGGA…PFTH), 312–332 (LSQL…WAAT), and 339–358 (FIII…ISTP).

The protein belongs to the cytochrome b family. As to quaternary structure, the cytochrome bc1 complex contains 3 respiratory subunits (MT-CYB, CYC1 and UQCRFS1), 2 core proteins (UQCRC1 and UQCRC2) and probably 6 low-molecular weight proteins. The cofactor is heme b.

It is found in the mitochondrion inner membrane. Functionally, component of the ubiquinol-cytochrome c reductase complex (complex III or cytochrome b-c1 complex) that is part of the mitochondrial respiratory chain. The b-c1 complex mediates electron transfer from ubiquinol to cytochrome c. Contributes to the generation of a proton gradient across the mitochondrial membrane that is then used for ATP synthesis. This Python sebae (African rock python) protein is Cytochrome b (MT-CYB).